Consider the following 522-residue polypeptide: Sugar transport protein MST2 (522 aa).

At 1–24 (MAAATAADVAEDTASVYSGKLTLY) the chain is on the cytoplasmic side. The chain crosses the membrane as a helical span at residues 25 to 45 (VFLTCGVAATGGLIIGYDIGI). Residues 46 to 82 (SGGVTSMDTFLGKFFPSVLHQEQTAQGTSQYCKFNSQ) lie on the Extracellular side of the membrane. The chain crosses the membrane as a helical span at residues 83-103 (PLTAFTSSLYLAALVASFFVA). Topologically, residues 104-111 (SFTRALGR) are cytoplasmic. Residues 112–132 (KWSMFGGGVSFLAGATLNGAA) form a helical membrane-spanning segment. Topologically, residues 133-134 (RN) are extracellular. A helical membrane pass occupies residues 135-155 (VAMLIVGRILLGIGVAFCGLS). The Cytoplasmic portion of the chain corresponds to 156–169 (TPIYLSEMAPPRLR). The helical transmembrane segment at 170–190 (GMLNIGLQLMITVGIFSANLV) threads the bilayer. Topologically, residues 191-204 (NYGAAKIRGGWGWR) are extracellular. The helical transmembrane segment at 205–225 (VSLGLAAAPACVIAVGSLFLP) threads the bilayer. Residues 226–291 (DSPSSLINRG…DVLQRRYRPQ (66 aa)) lie on the Cytoplasmic side of the membrane. The chain crosses the membrane as a helical span at residues 292-312 (LAMAVLIPFFQQLTGINVIMF). At 313–329 (YAPVLFKTIGLGGDASL) the chain is on the extracellular side. Residues 330–350 (MSAVITGLVNIVATFVSIATV) form a helical membrane-spanning segment. The Cytoplasmic segment spans residues 351 to 361 (DSLGRRKLLFQ). The chain crosses the membrane as a helical span at residues 362–382 (GGCQMLVSQVIIGTLIGVVFG). At 383–391 (TSGDGNISR) the chain is on the extracellular side. The helical transmembrane segment at 392–412 (ALAVCIVVFICVYVAGFAWSW) threads the bilayer. The Cytoplasmic segment spans residues 413-434 (GPLGVLLPSEIFPLEVRPAGQS). The helical transmembrane segment at 435–455 (ISVAVNMLCTFAVAEAFLPML) threads the bilayer. Residues 456 to 459 (CHMR) lie on the Extracellular side of the membrane. Residues 460–480 (FGLFYFFSGWVLVMTLFVSAF) traverse the membrane as a helical segment. The Cytoplasmic segment spans residues 481 to 522 (LPETKGVPIEKMTVVWRTHWFWGRFYCNQDADAHVQVANSKV).

It belongs to the major facilitator superfamily. Sugar transporter (TC 2.A.1.1) family.

It localises to the membrane. In terms of biological role, mediates active uptake of hexoses by sugar:proton symport. Can transport glucose. The sequence is that of Sugar transport protein MST2 from Oryza sativa subsp. japonica (Rice).